A 419-amino-acid chain; its full sequence is L-rhamnose isomerase (419 aa).

Residues His-262, Asp-294, and Asp-296 each coordinate Mn(2+).

The protein belongs to the rhamnose isomerase family. As to quaternary structure, homotetramer. The cofactor is Mn(2+).

The protein resides in the cytoplasm. It carries out the reaction L-rhamnopyranose = L-rhamnulose. It functions in the pathway carbohydrate degradation; L-rhamnose degradation; glycerone phosphate from L-rhamnose: step 1/3. Catalyzes the interconversion of L-rhamnose and L-rhamnulose. The chain is L-rhamnose isomerase from Salmonella typhimurium (strain LT2 / SGSC1412 / ATCC 700720).